Consider the following 130-residue polypeptide: Small ribosomal subunit protein uS11 (130 aa).

The protein belongs to the universal ribosomal protein uS11 family. In terms of assembly, part of the 30S ribosomal subunit. Interacts with proteins S7 and S18. Binds to IF-3.

Located on the platform of the 30S subunit, it bridges several disparate RNA helices of the 16S rRNA. Forms part of the Shine-Dalgarno cleft in the 70S ribosome. This Acidiphilium cryptum (strain JF-5) protein is Small ribosomal subunit protein uS11.